The sequence spans 855 residues: Suppressor of tumorigenicity 14 protein homolog (855 aa).

The segment at 1–21 (MKSERARRGAGGSGDLGAGFK) is disordered. Residues 1 to 55 (MKSERARRGAGGSGDLGAGFKYTSRPENMNGCEEGVEFLPANNSSKVEKGGPRRW) are Cytoplasmic-facing. The residue at position 13 (S13) is a Phosphoserine. The chain crosses the membrane as a helical; Signal-anchor for type II membrane protein span at residues 56 to 76 (VVLMAVLAAFLALSLLAGLLA). The Extracellular portion of the chain corresponds to 77-855 (WHFQDRNVRV…RDWIKAQIGV (779 aa)). The 118-residue stretch at 86 to 203 (VQKIFNGYLS…TSVVAFPSDP (118 aa)) folds into the SEA domain. Residue N109 is glycosylated (N-linked (GlcNAc...) asparagine). C214 and C244 are joined by a disulfide. 2 consecutive CUB domains span residues 214–334 (CSFA…FFQL) and 340–447 (CGGY…FLSF). 2 N-linked (GlcNAc...) asparagine glycosylation sites follow: N302 and N365. Disulfide bonds link C340-C366, C397-C410, C453-C464, C459-C477, C471-C486, C488-C501, C496-C514, C508-C523, C525-C537, C532-C550, C544-C559, C567-C579, C574-C593, C587-C602, and C641-C657. LDL-receptor class A domains are found at residues 452–487 (PCPG…LDCK), 487–524 (KCNA…EGCS), 524–560 (SCPP…AKCQ), and 566–603 (PCTE…KDCD). N-linked (GlcNAc...) asparagine glycosylation occurs at N489. The Peptidase S1 domain maps to 615–854 (VVGGENSDQG…FRDWIKAQIG (240 aa)). Active-site charge relay system residues include H656 and D711. N772 carries an N-linked (GlcNAc...) asparagine glycan. 2 disulfide bridges follow: C776/C790 and C801/C830. The active-site Charge relay system is S805.

It belongs to the peptidase S1 family. Interacts with CDCP1. May interact with TMEFF1.

It localises to the membrane. The catalysed reaction is Cleaves various synthetic substrates with Arg or Lys at the P1 position and prefers small side-chain amino acids, such as Ala and Gly, at the P2 position.. In terms of biological role, exhibits trypsin-like activity as defined by cleavage of synthetic substrates with Arg or Lys as the P1 site. Involved in the terminal differentiation of keratinocytes through prostasin (PRSS8) activation and filaggrin (FLG) processing. Proteolytically cleaves and therefore activates TMPRSS13. In Bos taurus (Bovine), this protein is Suppressor of tumorigenicity 14 protein homolog (ST14).